Here is a 148-residue protein sequence, read N- to C-terminus: Snaclec alboaggregin-D subunit beta (148 aa).

The signal sequence occupies residues 1–23 (MGRFISVSFGLLVVFLSLSGAGA). C27 and C38 are oxidised to a cystine. Positions 34–145 (YDLYCYKVFK…CNSTYSFVCK (112 aa)) constitute a C-type lectin domain. N47 carries an N-linked (GlcNAc...) asparagine glycan. 2 disulfides stabilise this stretch: C55/C144 and C121/C136. Residue N137 is glycosylated (N-linked (GlcNAc...) asparagine).

In terms of assembly, tetramer of heterodimers of alpha and beta subunits (alphabeta)(4); disulfide-linked. In terms of tissue distribution, expressed by the venom gland.

It is found in the secreted. Its function is as follows. Snaclec that induces human platelet aggregation in the absence of any cofactor with the EC(50) of 0.25 nM and causes tyrosine phosphorylation in human platelets. Antibodies against either platelet GPIbalpha (GP1BA) or GPVI (GP6) inhibit alboaggregin D-induced platelet aggregation. Only the combination of these two antibodies completely inhibit aggregation, suggesting that it acts through both GPIbalpha (GP1BA) and GPVI (GP6). The sequence is that of Snaclec alboaggregin-D subunit beta from Trimeresurus albolabris (White-lipped pit viper).